Consider the following 352-residue polypeptide: Pre-rRNA-processing protein ipi1 (352 aa).

It belongs to the IPI1/TEX10 family. In terms of assembly, component of the RIX1 complex, composed of rrm-9/ipi1, rix1/ipi2 and ipi3 in a 1:2:2 stoichiometry. The complex interacts (via rix1) with mdn1 (via its hexameric AAA ATPase ring) and the pre-60S ribosome particles.

It localises to the nucleus. Functionally, component of the RIX1 complex required for processing of ITS2 sequences from 35S pre-rRNA. The sequence is that of Pre-rRNA-processing protein ipi1 (rrm-9) from Neurospora crassa (strain ATCC 24698 / 74-OR23-1A / CBS 708.71 / DSM 1257 / FGSC 987).